Here is a 323-residue protein sequence, read N- to C-terminus: MSNLTLSQFLQQEKGNLTPELAQVIDTIAATCKTIDQALQKGALAGILGSAGNENVQGETQKKLDVISNDYLIDALKVHPHVGGLASEELDDFTPAQENGEYLVLFDPLDGSSNIDINMCVGTIFSILPAKNAITQAQDFMQAGTQQVAAGYVLYGPSTMMALTVGNGVAFFTLDPVTQTFLLTTENVQVSADTQEFAINASNQRHWEQPVKQYIEELLAGKTSVREKDFNMRWVACMVGDVHRILCRGGIFLYPYDLKDPKKAGRLRLMYEANPMSMLIEQAGGASTTGRVRILEIEPTELHQRVPVIIGSKNEVERVTSYH.

Positions 88, 107, 109, and 110 each coordinate Mg(2+). Substrate is bound by residues 110–113 (DGSS) and asparagine 200. Glutamate 272 serves as a coordination point for Mg(2+).

Belongs to the FBPase class 1 family. Homotetramer. Mg(2+) is required as a cofactor.

The protein localises to the cytoplasm. The enzyme catalyses beta-D-fructose 1,6-bisphosphate + H2O = beta-D-fructose 6-phosphate + phosphate. It functions in the pathway carbohydrate biosynthesis; gluconeogenesis. This Acinetobacter baumannii (strain AYE) protein is Fructose-1,6-bisphosphatase class 1.